The following is a 228-amino-acid chain: L-ribulose-5-phosphate 4-epimerase UlaF (228 aa).

Residues 26–27 (GN), 43–44 (SG), and 72–73 (SS) each bind substrate. D74, H93, and H95 together coordinate Zn(2+). The active-site Proton donor/acceptor is the D118. Zn(2+) is bound at residue H167. The Proton donor/acceptor role is filled by Y225.

The protein belongs to the aldolase class II family. AraD/FucA subfamily. Requires Zn(2+) as cofactor.

It catalyses the reaction L-ribulose 5-phosphate = D-xylulose 5-phosphate. It functions in the pathway cofactor degradation; L-ascorbate degradation; D-xylulose 5-phosphate from L-ascorbate: step 4/4. In terms of biological role, catalyzes the isomerization of L-ribulose 5-phosphate to D-xylulose 5-phosphate. Is involved in the anaerobic L-ascorbate utilization. The chain is L-ribulose-5-phosphate 4-epimerase UlaF from Escherichia coli O8 (strain IAI1).